A 165-amino-acid polypeptide reads, in one-letter code: Protein C2-DOMAIN ABA-RELATED 8 (165 aa).

At methionine 1 the chain carries N-acetylmethionine. The C2 domain maps to 1 to 106 (MENLVGLLRI…QGTDIQELTN (106 aa)). 7 residues coordinate Ca(2+): arginine 21, aspartate 22, aspartate 27, aspartate 73, lysine 74, aspartate 75, and aspartate 81.

The protein belongs to the plant CAR protein family. Binds to PYR/PYL/RCAR abscisic acid intracellular receptors in an ABA-independent manner, both at the plasma membrane and in the nucleus.

Its subcellular location is the cell membrane. The protein resides in the nucleus. Its function is as follows. Stimulates the GTPase/ATPase activities of Obg-like ATPases. Mediates the transient calcium-dependent interaction of PYR/PYL/RCAR abscisic acid (ABA) receptors with the plasma membrane and thus regulates ABA sensitivity. In Arabidopsis thaliana (Mouse-ear cress), this protein is Protein C2-DOMAIN ABA-RELATED 8.